The following is a 117-amino-acid chain: Protein Turandot F (117 aa).

The signal sequence occupies residues 1 to 22 (MKTVILFSFLLVLLGYLGAGHA).

Belongs to the Turandot family.

It is found in the secreted. Its function is as follows. A humoral factor that may play a role in stress tolerance. The polypeptide is Protein Turandot F (Drosophila sechellia (Fruit fly)).